A 141-amino-acid chain; its full sequence is Large ribosomal subunit protein uL11 (141 aa).

Belongs to the universal ribosomal protein uL11 family. Part of the ribosomal stalk of the 50S ribosomal subunit. Interacts with L10 and the large rRNA to form the base of the stalk. L10 forms an elongated spine to which L12 dimers bind in a sequential fashion forming a multimeric L10(L12)X complex. Post-translationally, one or more lysine residues are methylated.

Its function is as follows. Forms part of the ribosomal stalk which helps the ribosome interact with GTP-bound translation factors. The chain is Large ribosomal subunit protein uL11 from Cyanothece sp. (strain PCC 7425 / ATCC 29141).